A 48-amino-acid chain; its full sequence is Delta-actitoxin-Bcg1c (48 aa).

3 cysteine pairs are disulfide-bonded: Cys4-Cys45, Cys6-Cys35, and Cys28-Cys46.

It is found in the secreted. The protein resides in the nematocyst. Functionally, binds specifically to voltage-gated sodium channels SCN1A/Nav1.1, thereby delaying their inactivation during signal transduction. The sequence is that of Delta-actitoxin-Bcg1c from Bunodosoma cangicum (Sea anemone).